Consider the following 32-residue polypeptide: U21-ctenitoxin-Co1a (32 aa).

Disulfide bonds link Cys3–Cys17, Cys10–Cys21, and Cys16–Cys30.

As to expression, expressed by the venom gland.

It is found in the secreted. Not toxic to mice by intracerebroventricular injection. This chain is U21-ctenitoxin-Co1a, found in Ctenus ornatus (Brazilian spider).